Reading from the N-terminus, the 376-residue chain is Chaperone protein DnaJ (376 aa).

The region spanning 4 to 70 is the J domain; that stretch reads DYYQILGVSK…QKRAAYDRFG (67 aa). A CR-type zinc finger spans residues 139 to 217; that stretch reads GVEKNISFSS…CHGLGRYHKQ (79 aa). Zn(2+)-binding residues include cysteine 152, cysteine 155, cysteine 169, cysteine 172, cysteine 191, cysteine 194, cysteine 205, and cysteine 208. CXXCXGXG motif repeat units follow at residues 152 to 159, 169 to 176, 191 to 198, and 205 to 212; these read CDTCHGSG, CDACGGVG, CHKCQGNG, and CKKCHGLG.

It belongs to the DnaJ family. Homodimer. Zn(2+) is required as a cofactor.

Its subcellular location is the cytoplasm. Its function is as follows. Participates actively in the response to hyperosmotic and heat shock by preventing the aggregation of stress-denatured proteins and by disaggregating proteins, also in an autonomous, DnaK-independent fashion. Unfolded proteins bind initially to DnaJ; upon interaction with the DnaJ-bound protein, DnaK hydrolyzes its bound ATP, resulting in the formation of a stable complex. GrpE releases ADP from DnaK; ATP binding to DnaK triggers the release of the substrate protein, thus completing the reaction cycle. Several rounds of ATP-dependent interactions between DnaJ, DnaK and GrpE are required for fully efficient folding. Also involved, together with DnaK and GrpE, in the DNA replication of plasmids through activation of initiation proteins. This chain is Chaperone protein DnaJ, found in Rickettsia bellii (strain RML369-C).